Here is a 483-residue protein sequence, read N- to C-terminus: E3 ubiquitin-protein ligase TRIM50 (483 aa).

The RING-type zinc-finger motif lies at 16–57 (CPICLEVFKEPLMLQCGHSYCKDCLDNLSQHLDSELCCPVCR). Residues 84–125 (IEPTVCVHHRNPLSLFCEKDQEFICGLCGLLGSHQHHRVTPV) form a B box-type zinc finger. 4 residues coordinate Zn(2+): C89, H92, C111, and H117. 2 coiled-coil regions span residues 127 to 169 (TVYS…NESD) and 203 to 236 (GLVASLDMQLEQAQGTQERLAQAEQVLEQFGNES). The region spanning 275-474 (DIKLTVWKRL…LPMVLPPPSG (200 aa)) is the B30.2/SPRY domain. K372 is modified (N6-acetyllysine).

This sequence belongs to the TRIM/RBCC family. As to quaternary structure, can form dimers and trimers. Interacts with several E2 ubiquitin-conjugating enzymes, including UBE2L6, UBE2E1, UBE2E3. No interaction with UBE2H. Interacts with BECN1. Interacts with SQSTM1. Interacts with NLRP3. Auto-ubiquitinated. In terms of processing, acetylated by EP300 and KAT2B. HDAC6 drives TRIM50 deacetylation. Acetylation antagonizes with TRIM50 ubiquitination. As to expression, expressed in the stomach.

The protein localises to the cytoplasm. The catalysed reaction is S-ubiquitinyl-[E2 ubiquitin-conjugating enzyme]-L-cysteine + [acceptor protein]-L-lysine = [E2 ubiquitin-conjugating enzyme]-L-cysteine + N(6)-ubiquitinyl-[acceptor protein]-L-lysine.. Functionally, E3 ubiquitin-protein ligase that ubiquitinates Beclin-1/BECN1 in a 'Lys-63'-dependent manner enhancing its binding to ULK1. In turn, promotes starvation-induced autophagy activation. Also interacts with p62/SQSTM1 protein and thereby induces the formation and the autophagy clearance of aggresome-associated polyubiquitinated proteins through HDAC6 interaction. Also promotes NLRP3 inflammasome activation by directly inducing NLRP3 oligomerization independent of its E3 ligase function. The chain is E3 ubiquitin-protein ligase TRIM50 (Trim50) from Mus musculus (Mouse).